A 150-amino-acid polypeptide reads, in one-letter code: Putative biopolymer transport protein ExbB-like 2 (150 aa).

A run of 3 helical transmembrane segments spans residues 5–25 (VDYG…AIAI), 63–83 (APYI…MDLG), and 97–117 (LALA…AIVI).

Belongs to the ExbB/TolQ family.

It is found in the cell inner membrane. The sequence is that of Putative biopolymer transport protein ExbB-like 2 from Helicobacter pylori (strain J99 / ATCC 700824) (Campylobacter pylori J99).